Consider the following 218-residue polypeptide: Thiopurine S-methyltransferase (218 aa).

S-adenosyl-L-methionine-binding residues include Trp10, Leu45, Glu66, and Arg123.

Belongs to the class I-like SAM-binding methyltransferase superfamily. TPMT family.

Its subcellular location is the cytoplasm. The catalysed reaction is S-adenosyl-L-methionine + a thiopurine = S-adenosyl-L-homocysteine + a thiopurine S-methylether.. The sequence is that of Thiopurine S-methyltransferase from Pseudomonas paraeruginosa (strain DSM 24068 / PA7) (Pseudomonas aeruginosa (strain PA7)).